A 205-amino-acid chain; its full sequence is Protein N-terminal glutamine amidohydrolase (205 aa).

Catalysis depends on residues Cys-20, His-74, and Asp-90.

It belongs to the NTAQ1 family. As to quaternary structure, monomer.

It catalyses the reaction N-terminal L-glutaminyl-[protein] + H2O = N-terminal L-glutamyl-[protein] + NH4(+). Its function is as follows. Mediates the side-chain deamidation of N-terminal glutamine residues to glutamate, an important step in N-end rule pathway of protein degradation. Conversion of the resulting N-terminal glutamine to glutamate renders the protein susceptible to arginylation, polyubiquitination and degradation as specified by the N-end rule. Does not act on substrates with internal or C-terminal glutamine and does not act on non-glutamine residues in any position. This chain is Protein N-terminal glutamine amidohydrolase (tun), found in Drosophila willistoni (Fruit fly).